We begin with the raw amino-acid sequence, 431 residues long: Hydroxylamine reductase (431 aa).

[4Fe-4S] cluster contacts are provided by cysteine 5, cysteine 8, cysteine 17, and cysteine 23. 8 residues coordinate hybrid [4Fe-2O-2S] cluster: histidine 131, glutamate 155, cysteine 199, cysteine 286, cysteine 314, cysteine 339, glutamate 373, and lysine 375. Cysteine 286 bears the Cysteine persulfide mark.

This sequence belongs to the HCP family. [4Fe-4S] cluster is required as a cofactor. It depends on hybrid [4Fe-2O-2S] cluster as a cofactor.

It localises to the cytoplasm. The enzyme catalyses A + NH4(+) + H2O = hydroxylamine + AH2 + H(+). Catalyzes the reduction of hydroxylamine to form NH(3) and H(2)O. The chain is Hydroxylamine reductase from Thermotoga petrophila (strain ATCC BAA-488 / DSM 13995 / JCM 10881 / RKU-1).